Here is a 333-residue protein sequence, read N- to C-terminus: Adenosine deaminase (333 aa).

Zn(2+)-binding residues include histidine 12 and histidine 14. Substrate-binding residues include histidine 14, aspartate 16, and glycine 170. Histidine 197 lines the Zn(2+) pocket. Catalysis depends on glutamate 200, which acts as the Proton donor. Aspartate 278 serves as a coordination point for Zn(2+). Residue aspartate 279 coordinates substrate.

The protein belongs to the metallo-dependent hydrolases superfamily. Adenosine and AMP deaminases family. Adenosine deaminase subfamily. The cofactor is Zn(2+).

The catalysed reaction is adenosine + H2O + H(+) = inosine + NH4(+). It carries out the reaction 2'-deoxyadenosine + H2O + H(+) = 2'-deoxyinosine + NH4(+). Functionally, catalyzes the hydrolytic deamination of adenosine and 2-deoxyadenosine. This Escherichia coli O7:K1 (strain IAI39 / ExPEC) protein is Adenosine deaminase.